The primary structure comprises 172 residues: UPF0114 protein PMI3225 (172 aa).

4 helical membrane-spanning segments follow: residues 15-35 (LFAP…IKFF), 57-77 (LLSL…IFSG), 108-128 (KVAA…FMDL), and 136-156 (LLWY…MGYL).

It belongs to the UPF0114 family.

Its subcellular location is the cell membrane. The sequence is that of UPF0114 protein PMI3225 from Proteus mirabilis (strain HI4320).